Here is a 491-residue protein sequence, read N- to C-terminus: Ran-binding protein 3-like (491 aa).

A RanBD1 domain is found at 270–441; that stretch reads TFKSVLKFPN…VALRSLAKQG (172 aa). Positions 440–468 are disordered; that stretch reads QGDGGPAESQSDTALPQLNGESCDEDEDE. Residues 447-459 show a composition bias toward polar residues; that stretch reads ESQSDTALPQLNG.

Interacts with SMAD1, SMAD5 and SMAD8.

It localises to the nucleus. Its subcellular location is the cytoplasm. In terms of biological role, nuclear export factor for BMP-specific SMAD1/5/8 that plays a critical role in terminating BMP signaling and regulating mesenchymal stem cell differentiation by blocking osteoblast differentiation to promote myogenic differention. Directly recognizes dephosphorylated SMAD1/5/8 and mediates their nuclear export in a Ran-dependent manner. The polypeptide is Ran-binding protein 3-like (Ranbp3l) (Mus musculus (Mouse)).